Consider the following 390-residue polypeptide: Pyruvate dehydrogenase E1 component subunit alpha, somatic form, mitochondrial (390 aa).

The N-terminal 29 residues, 1 to 29 (MRKMLAAVSRVLAGAAQKPASRVLVASRN), are a transit peptide targeting the mitochondrion. Lysine 63 bears the N6-acetyllysine; alternate mark. Lysine 63 carries the post-translational modification N6-succinyllysine; alternate. Positions 92, 118, 119, 157, 165, 167, 196, 197, 198, 225, and 227 each coordinate pyruvate. Thiamine diphosphate contacts are provided by tyrosine 118 and arginine 119. Thiamine diphosphate is bound by residues glycine 165, valine 167, aspartate 196, glycine 197, alanine 198, and asparagine 225. Mg(2+) is bound at residue aspartate 196. The Mg(2+) site is built by asparagine 225 and tyrosine 227. A Phosphoserine; by PDK1 modification is found at serine 232. N6-acetyllysine; alternate is present on lysine 244. Lysine 244 is subject to N6-succinyllysine; alternate. At lysine 267 the chain carries N6-acetyllysine. The residue at position 277 (lysine 277) is an N6-succinyllysine. Residue histidine 292 participates in thiamine diphosphate binding. Residue serine 293 is modified to Phosphoserine; by PDK1, PDK2, PDK3 and PDK4. Serine 295 is modified (phosphoserine). The residue at position 300 (serine 300) is a Phosphoserine; by PDK1, PDK2, PDK3 and PDK4. Tyrosine 301 carries the phosphotyrosine modification. N6-acetyllysine; alternate is present on lysine 313. Lysine 313 carries the N6-succinyllysine; alternate modification. N6-acetyllysine is present on residues lysine 321 and lysine 336. Lysine 385 is modified (N6-succinyllysine).

As to quaternary structure, heterotetramer of two PDHA1 and two PDHB subunits. The heterotetramer interacts with DLAT, and is part of the multimeric pyruvate dehydrogenase complex that contains multiple copies of pyruvate dehydrogenase (E1), dihydrolipoamide acetyltransferase (DLAT, E2) and lipoamide dehydrogenase (DLD, E3). These subunits are bound to an inner core composed of about 48 DLAT and 12 PDHX molecules. The cofactor is thiamine diphosphate. Mg(2+) serves as cofactor. In terms of processing, phosphorylation at Ser-232, Ser-293 and Ser-300 by PDK family kinases inactivates the enzyme; for this phosphorylation at a single site is sufficient. Phosphorylation at Ser-293 interferes with access to active site, and thereby inactivates the enzyme. Dephosphorylation at all three sites, i.e. at Ser-232, Ser-293 and Ser-300, is required for reactivation. Acetylation alters the phosphorylation pattern. Deacetylated by SIRT3. As to expression, in all tissues, but in very low amount in testis.

It is found in the mitochondrion matrix. It carries out the reaction N(6)-[(R)-lipoyl]-L-lysyl-[protein] + pyruvate + H(+) = N(6)-[(R)-S(8)-acetyldihydrolipoyl]-L-lysyl-[protein] + CO2. With respect to regulation, pyruvate dehydrogenase activity is inhibited by phosphorylation of PDHA1; it is reactivated by dephosphorylation. The pyruvate dehydrogenase complex catalyzes the overall conversion of pyruvate to acetyl-CoA and CO(2), and thereby links the glycolytic pathway to the tricarboxylic cycle. This Rattus norvegicus (Rat) protein is Pyruvate dehydrogenase E1 component subunit alpha, somatic form, mitochondrial (Pdha1).